A 168-amino-acid polypeptide reads, in one-letter code: Endoribonuclease YbeY (168 aa).

Zn(2+)-binding residues include histidine 123, histidine 127, and histidine 133.

The protein belongs to the endoribonuclease YbeY family. It depends on Zn(2+) as a cofactor.

The protein resides in the cytoplasm. Its function is as follows. Single strand-specific metallo-endoribonuclease involved in late-stage 70S ribosome quality control and in maturation of the 3' terminus of the 16S rRNA. This is Endoribonuclease YbeY from Francisella tularensis subsp. tularensis (strain SCHU S4 / Schu 4).